The primary structure comprises 327 residues: Mitochondrial coenzyme A transporter SLC25A42 (327 aa).

Solcar repeat units follow at residues 34–120 (KSVL…YKKL), 132–217 (LTPI…LKKL), and 227–315 (PYTF…TQIL). Transmembrane regions (helical) follow at residues 36 to 56 (VLNS…AVAP), 92 to 112 (LWRG…IQFC), 138 to 158 (LLAG…LDLV), 192 to 209 (GFTP…ISFF), 233 to 253 (LLFG…LDVV), and 296 to 316 (VKGP…QILL).

The protein belongs to the mitochondrial carrier (TC 2.A.29) family.

The protein resides in the mitochondrion inner membrane. The enzyme catalyses ADP(out) + CoA(in) = ADP(in) + CoA(out). The catalysed reaction is 3'-dephospho-CoA(in) + ADP(out) = 3'-dephospho-CoA(out) + ADP(in). It carries out the reaction adenosine 3',5'-bisphosphate(in) + ADP(out) = adenosine 3',5'-bisphosphate(out) + ADP(in). It catalyses the reaction AMP(in) + ADP(out) = AMP(out) + ADP(in). The enzyme catalyses dADP(in) + ADP(out) = dADP(out) + ADP(in). The catalysed reaction is ADP(in) + ATP(out) = ADP(out) + ATP(in). Mitochondrial carrier mediating the transport of coenzyme A (CoA) in mitochondria in exchange for intramitochondrial (deoxy)adenine nucleotides and adenosine 3',5'-diphosphate. The protein is Mitochondrial coenzyme A transporter SLC25A42 (slc25a42) of Xenopus laevis (African clawed frog).